The sequence spans 125 residues: Translation initiation factor 5A (125 aa).

K36 is modified (hypusine).

Belongs to the eIF-5A family.

Its subcellular location is the cytoplasm. In terms of biological role, functions by promoting the formation of the first peptide bond. This chain is Translation initiation factor 5A (eIF5A), found in Halorubrum lacusprofundi (strain ATCC 49239 / DSM 5036 / JCM 8891 / ACAM 34).